The chain runs to 159 residues: Ribosomal RNA large subunit methyltransferase H (159 aa).

Residues Leu76, Gly108, and 127-132 (FSKMTF) contribute to the S-adenosyl-L-methionine site.

The protein belongs to the RNA methyltransferase RlmH family. As to quaternary structure, homodimer.

The protein localises to the cytoplasm. The catalysed reaction is pseudouridine(1915) in 23S rRNA + S-adenosyl-L-methionine = N(3)-methylpseudouridine(1915) in 23S rRNA + S-adenosyl-L-homocysteine + H(+). Its function is as follows. Specifically methylates the pseudouridine at position 1915 (m3Psi1915) in 23S rRNA. The sequence is that of Ribosomal RNA large subunit methyltransferase H from Bifidobacterium animalis subsp. lactis (strain AD011).